The primary structure comprises 232 residues: DNA damage-inducible transcript 4 protein (232 aa).

Residues 1–71 (MPSLWDRFSS…SGFGPEEDTA (71 aa)) form a disordered region. The segment covering 9 to 22 (SSSSTSSSPSSLPR) has biased composition (low complexity). Position 19 is a phosphoserine (Ser19). Phosphothreonine is present on residues Thr23 and Thr25. The residue at position 121 (Ser121) is a Phosphoserine.

The protein belongs to the DDIT4 family. In terms of assembly, monomer. Interacts with BTRC. Identified in a complex with CUL4A, DDB1 and BTRC. Interacts with TXNIP; this inhibits the proteasomal degradation of DDIT4. Post-translationally, phosphorylated by GSK3B; this promotes proteasomal degradation. In terms of processing, polyubiquitinated by a DCX (DDB1-CUL4A-RBX1) E3 ubiquitin-protein ligase complex with BTRC as substrate-recognition component, leading to its proteasomal degradation. In terms of tissue distribution, broadly expressed, with lowest levels in brain, skeletal muscle and intestine. Up-regulated in substantia nigra neurons from Parkinson disease patients (at protein level).

The protein resides in the mitochondrion. Its subcellular location is the cytoplasm. It localises to the cytosol. Functionally, regulates cell growth, proliferation and survival via inhibition of the activity of the mammalian target of rapamycin complex 1 (mTORC1). Inhibition of mTORC1 is mediated by a pathway that involves DDIT4/REDD1, AKT1, the TSC1-TSC2 complex and the GTPase RHEB. Plays an important role in responses to cellular energy levels and cellular stress, including responses to hypoxia and DNA damage. Regulates p53/TP53-mediated apoptosis in response to DNA damage via its effect on mTORC1 activity. Its role in the response to hypoxia depends on the cell type; it mediates mTORC1 inhibition in fibroblasts and thymocytes, but not in hepatocytes. Required for mTORC1-mediated defense against viral protein synthesis and virus replication. Inhibits neuronal differentiation and neurite outgrowth mediated by NGF via its effect on mTORC1 activity. Required for normal neuron migration during embryonic brain development. Plays a role in neuronal cell death. In Homo sapiens (Human), this protein is DNA damage-inducible transcript 4 protein (DDIT4).